Reading from the N-terminus, the 163-residue chain is NADH-quinone oxidoreductase subunit B (163 aa).

[4Fe-4S] cluster contacts are provided by Cys-32, Cys-33, Cys-98, and Cys-127.

It belongs to the complex I 20 kDa subunit family. NDH-1 is composed of 14 different subunits. Subunits NuoB, C, D, E, F, and G constitute the peripheral sector of the complex. It depends on [4Fe-4S] cluster as a cofactor.

It localises to the cell inner membrane. The enzyme catalyses a quinone + NADH + 5 H(+)(in) = a quinol + NAD(+) + 4 H(+)(out). In terms of biological role, NDH-1 shuttles electrons from NADH, via FMN and iron-sulfur (Fe-S) centers, to quinones in the respiratory chain. Couples the redox reaction to proton translocation (for every two electrons transferred, four hydrogen ions are translocated across the cytoplasmic membrane), and thus conserves the redox energy in a proton gradient. The protein is NADH-quinone oxidoreductase subunit B of Pelobacter propionicus (strain DSM 2379 / NBRC 103807 / OttBd1).